Here is a 971-residue protein sequence, read N- to C-terminus: Zinc finger CCCH domain-containing protein 7A (971 aa).

TPR repeat units follow at residues 43-76, 89-122, and 124-156; these read VRNL…ADYA, EKLY…NASN, and KALY…VPQD. The residue at position 210 (T210) is a Phosphothreonine. 2 C3H1-type zinc fingers span residues 634-656 and 769-797; these read LCRH…HSLV and PLQF…HSPE. A C2H2-type zinc finger spans residues 857–881; the sequence is FHCWMCGKNCNSEKQWQGHISSEKH. The segment at 906–928 adopts a C3H1-type 3 zinc-finger fold; sequence ICDRYMNGTCPEGNSCKFAHGNA. Residues 924–952 adopt a coiled-coil conformation; that stretch reads AHGNAELHEWEERRDALKMKLNKARKDHL.

The protein localises to the nucleus. May be a specific regulator of miRNA biogenesis. Binds to microRNAs MIR7-1, MIR16-2 and MIR29A hairpins recognizing the 3'-ATA(A/T)-5' motif in the apical loop. This chain is Zinc finger CCCH domain-containing protein 7A (ZC3H7A), found in Homo sapiens (Human).